The following is an 892-amino-acid chain: DNA mismatch repair protein MutS (892 aa).

Positions 663–684 are disordered; sequence TNTSLREAAPTTTLSTSDQGQM. 696 to 703 provides a ligand contact to ATP; it reads GPNASGKS.

It belongs to the DNA mismatch repair MutS family.

This protein is involved in the repair of mismatches in DNA. It is possible that it carries out the mismatch recognition step. This protein has a weak ATPase activity. The polypeptide is DNA mismatch repair protein MutS (Nostoc punctiforme (strain ATCC 29133 / PCC 73102)).